Consider the following 321-residue polypeptide: Basic peroxidase (321 aa).

Residues 1–30 (MSYHKSSGTILMVPLFMLLISVNYFMSCNA) form the signal peptide. Q31 bears the Pyrrolidone carboxylic acid mark. 4 disulfides stabilise this stretch: C41/C117, C74/C79, C123/C317, and C202/C228. H72 acts as the Proton acceptor in catalysis. Residues D73, V76, G78, D80, and S82 each contribute to the Ca(2+) site. P165 provides a ligand contact to substrate. H195 is a binding site for heme b. A Ca(2+)-binding site is contributed by T196. N-linked (GlcNAc...) asparagine glycosylation is found at N211 and N221. Ca(2+) is bound by residues D241, T244, and D249.

The protein belongs to the peroxidase family. Classical plant (class III) peroxidase subfamily. Heme b serves as cofactor. The cofactor is Ca(2+). In terms of processing, N-glycosylated. In terms of tissue distribution, expressed in tracheary elements, roots, young and old hypocotyls, and stems in the partially glycosylated form and in roots and young hypocotyls in the fully glycosylated form. None of the isoforms is significantly expressed in leaves or cotyledons.

The protein resides in the secreted. The enzyme catalyses 2 a phenolic donor + H2O2 = 2 a phenolic radical donor + 2 H2O. Its function is as follows. Removal of H(2)O(2), oxidation of toxic reductants, biosynthesis and degradation of lignin, suberization, auxin catabolism, response to environmental stresses such as wounding, pathogen attack and oxidative stress. These functions might be dependent on each isozyme/isoform in each plant tissue. Involved in the synthesis of highly polymerized lignins. In Zinnia elegans (Garden zinnia), this protein is Basic peroxidase (POD1).